The sequence spans 350 residues: Cephaeline 6'-O-methyltransferase CiOMT (350 aa).

Gly193, Asp216, Asp236, Met237, and Lys250 together coordinate S-adenosyl-L-methionine. Residue His254 is the Proton acceptor of the active site.

It belongs to the class I-like SAM-binding methyltransferase superfamily. Cation-independent O-methyltransferase family.

It localises to the cytoplasm. It is found in the cytosol. The catalysed reaction is 7'-O-demethylcephaeline + S-adenosyl-L-methionine = cephaeline + S-adenosyl-L-homocysteine + H(+). It catalyses the reaction cephaeline + S-adenosyl-L-methionine = emetine + S-adenosyl-L-homocysteine + H(+). It functions in the pathway alkaloid biosynthesis. Inhibited by Co(2+), Ni(2+), Zn(2+) and Mn(2+) ions. O-methyltransferase involved in the biosynthesis of ipecac and benzylisoquinoline monoterpenoid-isoquinoline alkaloids natural products, starting by the condensation of dopamine and secologanin, and including emetine and cephaeline, drugs used both as anti-protozoal (e.g. treatment of ameobiasis) and as emetic agents. Catalyzes successively the 7'-O-methylation of 7'-O-demethylcephaeline to produce cephaeline, and its 6'-O-methylation to produce emetine. The polypeptide is Cephaeline 6'-O-methyltransferase CiOMT (Carapichea ipecacuanha (Ipecac)).